Reading from the N-terminus, the 159-residue chain is MAVLWRLSAVCGAQGGRALLLRTPVVRPAHISAFLQDRPIPEWCGVQHIHLSPGHHSGSKAASLHWTSERVVSVLLLGLLPAAYLNPCSAMDYSLAATLTLHGHWGLGQVVTDYVHGDASQKAAKAGLLALSALTFAGLCYFNYHDVGICKAVAMLWKL.

The transit peptide at 1–56 (MAVLWRLSAVCGAQGGRALLLRTPVVRPAHISAFLQDRPIPEWCGVQHIHLSPGHH) directs the protein to the mitochondrion. Over 57-63 (SGSKAAS) the chain is Mitochondrial matrix. A helical transmembrane segment spans residues 64-85 (LHWTSERVVSVLLLGLLPAAYL). Topologically, residues 86–90 (NPCSA) are mitochondrial intermembrane. Residues 91 to 111 (MDYSLAATLTLHGHWGLGQVV) form a helical membrane-spanning segment. His-102 serves as a coordination point for heme b. The Mitochondrial matrix segment spans residues 112-120 (TDYVHGDAS). Residue Tyr-114 coordinates a ubiquinone. Residues 121 to 142 (QKAAKAGLLALSALTFAGLCYF) form a helical membrane-spanning segment. The Mitochondrial intermembrane segment spans residues 143–159 (NYHDVGICKAVAMLWKL).

The protein belongs to the CybS family. Component of complex II composed of four subunits: the flavoprotein (FP) SDHA, iron-sulfur protein (IP) SDHB, and a cytochrome b560 composed of SDHC and SDHD.

The protein resides in the mitochondrion inner membrane. It participates in carbohydrate metabolism; tricarboxylic acid cycle. In terms of biological role, membrane-anchoring subunit of succinate dehydrogenase (SDH) that is involved in complex II of the mitochondrial electron transport chain and is responsible for transferring electrons from succinate to ubiquinone (coenzyme Q). SDH also oxidizes malate to the non-canonical enol form of oxaloacetate, enol-oxaloacetate. Enol-oxaloacetate, which is a potent inhibitor of the succinate dehydrogenase activity, is further isomerized into keto-oxaloacetate. The protein is Succinate dehydrogenase [ubiquinone] cytochrome b small subunit, mitochondrial (SDHD) of Pongo abelii (Sumatran orangutan).